We begin with the raw amino-acid sequence, 344 residues long: Dihydroorotase (344 aa).

Zn(2+)-binding residues include His13 and His15. Residues 15 to 17 and Asn41 contribute to the substrate site; that span reads HLR. 3 residues coordinate Zn(2+): Lys99, His136, and His174. Lys99 bears the N6-carboxylysine mark. His136 lines the substrate pocket. Position 219 (Leu219) interacts with substrate. Position 247 (Asp247) interacts with Zn(2+). Residue Asp247 is part of the active site. Substrate is bound by residues His251 and Ala263.

Belongs to the metallo-dependent hydrolases superfamily. DHOase family. Class II DHOase subfamily. As to quaternary structure, homodimer. Zn(2+) is required as a cofactor.

The catalysed reaction is (S)-dihydroorotate + H2O = N-carbamoyl-L-aspartate + H(+). Its pathway is pyrimidine metabolism; UMP biosynthesis via de novo pathway; (S)-dihydroorotate from bicarbonate: step 3/3. Its function is as follows. Catalyzes the reversible cyclization of carbamoyl aspartate to dihydroorotate. The polypeptide is Dihydroorotase (Acinetobacter baylyi (strain ATCC 33305 / BD413 / ADP1)).